A 270-amino-acid chain; its full sequence is Interleukin-2 receptor subunit alpha (270 aa).

The signal sequence occupies residues 1–21; that stretch reads MEPSLLMWGFFTFTMIPGCMA. In terms of domain architecture, Sushi 1 spans 22-84; the sequence is GACVQQPPSL…FWENKCQCMP (63 aa). Residues 22-245 are Extracellular-facing; sequence GACVQQPPSL…QPIIFTTQYQ (224 aa). Cystine bridges form between C24–C67, C49–C80, and C51–C82. Residues N33 and N70 are each glycosylated (N-linked (GlcNAc...) asparagine). The segment at 87-124 is disordered; that stretch reads SPRIPVKQVTPRPEEQKERKTTETQGQMQPPNQANLPG. The segment covering 98 to 108 has biased composition (basic and acidic residues); the sequence is RPEEQKERKTT. Positions 112–121 are enriched in polar residues; sequence GQMQPPNQAN. Residues 124-191 form the Sushi 2 domain; that stretch reads GHCKEPPPWE…WTQPKLKCKS (68 aa). 2 cysteine pairs are disulfide-bonded: C126–C171 and C153–C189. Residues N164 and N195 are each glycosylated (N-linked (GlcNAc...) asparagine). The tract at residues 190–225 is disordered; that stretch reads KSEKENGSFPEPQMSTAAPPTTKTSLPTRTKGTTDS. Polar residues predominate over residues 202–225; it reads QMSTAAPPTTKTSLPTRTKGTTDS. N-linked (GlcNAc...) asparagine glycosylation occurs at N227. A helical transmembrane segment spans residues 246–264; sequence LAVAGCVLLLLSILLLSGL. Topologically, residues 265 to 270 are cytoplasmic; the sequence is TWQRRR.

Non-covalent dimer of an alpha and a beta subunit. IL2R exists in 3 different forms: a high affinity dimer, an intermediate affinity monomer (beta subunit), and a low affinity monomer (alpha subunit). The high and intermediate affinity forms also associate with a gamma subunit.

The protein localises to the membrane. Functionally, receptor for interleukin-2. The receptor is involved in the regulation of immune tolerance by controlling regulatory T cells (TREGs) activity. TREGs suppress the activation and expansion of autoreactive T-cells. The polypeptide is Interleukin-2 receptor subunit alpha (IL2RA) (Sus scrofa (Pig)).